A 591-amino-acid chain; its full sequence is Developmental and secondary metabolism regulator VEA1 (591 aa).

A disordered region spans residues 1–22 (MATKASSILHPPNETEHTMSRI). A compositionally biased stretch (basic and acidic residues) spans 13 to 22 (NETEHTMSRI). In terms of domain architecture, Velvet spans 26 to 235 (GKKLTYNLKV…AEQGCRVRIR (210 aa)). The Nuclear localization signal motif lies at 40-45 (ERARAC). The disordered stretch occupies residues 238–547 (VRMRRREPKP…TSGGSDDEIM (310 aa)). Residues 245-260 (PKPNKDYGAYDDRRIT) show a composition bias toward basic and acidic residues. Positions 306-321 (HQQPSPNLAATPQSHL) are enriched in polar residues. Pro residues predominate over residues 330 to 347 (YHAPPPPPTAHPAPPPAY). Residues 386 to 395 (YDQSKSSLPM) show a composition bias toward polar residues. Over residues 422 to 433 (PSQLHPTQQYQQ) the composition is skewed to low complexity. Pro residues predominate over residues 434 to 448 (PTPPPPPPAAIAPHP). Positions 452-493 (RTPTKPSPSTFFPPTPSRLSVEVDSSNEADDAILNAIRTRRG) are PEST. The span at 494–516 (YILDEKSGATKRSRDSSDHDLKP) shows a compositional bias: basic and acidic residues.

It belongs to the velvet family. VeA subfamily. As to quaternary structure, component of the heterotrimeric velvet complex composed of LAE1, VEA1 and VEL2; VEA1 acting as a bridging protein between LAE1 and VEL2.

Its subcellular location is the nucleus. The protein resides in the cytoplasm. Its function is as follows. Component of the velvet transcription factor complex that controls sexual/asexual developmental ratio in response to light, promoting sexual development in the darkness while stimulating asexual sporulation under illumination. The velvet complex hat acts as a global regulator for secondary metabolite gene expression. Regulates cleistothecial formation and hyphal growth. Acts as a positive regulator of virulence. The sequence is that of Developmental and secondary metabolism regulator VEA1 from Ajellomyces capsulatus (Darling's disease fungus).